We begin with the raw amino-acid sequence, 921 residues long: Protein translocase subunit SecA (921 aa).

Residues Q85, 103–107, and D514 each bind ATP; that span reads GEGKT. Residues C905, C907, C916, and H917 each coordinate Zn(2+).

The protein belongs to the SecA family. As to quaternary structure, monomer and homodimer. Part of the essential Sec protein translocation apparatus which comprises SecA, SecYEG and auxiliary proteins SecDF-YajC and YidC. Requires Zn(2+) as cofactor.

Its subcellular location is the cell inner membrane. It is found in the cytoplasm. It carries out the reaction ATP + H2O + cellular proteinSide 1 = ADP + phosphate + cellular proteinSide 2.. Functionally, part of the Sec protein translocase complex. Interacts with the SecYEG preprotein conducting channel. Has a central role in coupling the hydrolysis of ATP to the transfer of proteins into and across the cell membrane, serving both as a receptor for the preprotein-SecB complex and as an ATP-driven molecular motor driving the stepwise translocation of polypeptide chains across the membrane. The sequence is that of Protein translocase subunit SecA from Herminiimonas arsenicoxydans.